Consider the following 434-residue polypeptide: MINQLINWQELSPQQKNSALARPAIADSALLSTQVANILSQVKNQGDKAILALTEQFDGIALSTLSVSSAQVAQAKLALTDKRLKAIHTAYKQIKSFHSAQTASDITVETTPGVKCTLKTEAIESVGLYIPAGSAPLPSTVLMLGVPAQLTGCQRTVLVCPPDKNGQLADEILVAADLCGITEIYTVGGAQAIAALAYGTETIPAVNKVFGPGNRYVTEAKTQLSQQVAGFAIDMPAGPSEVLVIADGQANPAFIAADLLSQAEHGVDSQVILLSDSESLISKVSTEIAQQLTLLSRCKIAEQALKQSRLILTKDLAQAVEVSNEYGPEHLIIQTEDAPTLLSKLRNAGSIFVGAYTPESAGDYASGTNHVLPTYGYSKVISSLSLADFSRRFTVQEITKAGLQSLAECIIELTDAEGLDAHQRAVTIRLEEGS.

Positions 129, 191, and 214 each coordinate NAD(+). The substrate site is built by serine 240, glutamine 262, and histidine 265. 2 residues coordinate Zn(2+): glutamine 262 and histidine 265. Residues glutamate 329 and histidine 330 each act as proton acceptor in the active site. Histidine 330, aspartate 363, glutamate 417, and histidine 422 together coordinate substrate. Position 363 (aspartate 363) interacts with Zn(2+). A Zn(2+)-binding site is contributed by histidine 422.

The protein belongs to the histidinol dehydrogenase family. Requires Zn(2+) as cofactor.

It catalyses the reaction L-histidinol + 2 NAD(+) + H2O = L-histidine + 2 NADH + 3 H(+). It participates in amino-acid biosynthesis; L-histidine biosynthesis; L-histidine from 5-phospho-alpha-D-ribose 1-diphosphate: step 9/9. In terms of biological role, catalyzes the sequential NAD-dependent oxidations of L-histidinol to L-histidinaldehyde and then to L-histidine. This is Histidinol dehydrogenase from Colwellia psychrerythraea (strain 34H / ATCC BAA-681) (Vibrio psychroerythus).